Consider the following 527-residue polypeptide: Arginine--tRNA ligase (527 aa).

A 'HIGH' region motif is present at residues 112 to 122 (ANPTGPLHIGH).

The protein belongs to the class-I aminoacyl-tRNA synthetase family. In terms of assembly, monomer.

It is found in the cytoplasm. It carries out the reaction tRNA(Arg) + L-arginine + ATP = L-arginyl-tRNA(Arg) + AMP + diphosphate. The protein is Arginine--tRNA ligase of Nitratiruptor sp. (strain SB155-2).